Here is a 784-residue protein sequence, read N- to C-terminus: Lon protease (784 aa).

The Lon N-terminal domain maps to 6-207 (LPLMALRDMV…TVITTLTSNI (202 aa)). 356–363 (GPPGVGKT) contacts ATP. The 182-residue stretch at 592–773 (EDQIGSTTGL…DQVLKHALVE (182 aa)) folds into the Lon proteolytic domain. Residues S679 and K722 contribute to the active site.

The protein belongs to the peptidase S16 family. As to quaternary structure, homohexamer. Organized in a ring with a central cavity.

It localises to the cytoplasm. It catalyses the reaction Hydrolysis of proteins in presence of ATP.. ATP-dependent serine protease that mediates the selective degradation of mutant and abnormal proteins as well as certain short-lived regulatory proteins. Required for cellular homeostasis and for survival from DNA damage and developmental changes induced by stress. Degrades polypeptides processively to yield small peptide fragments that are 5 to 10 amino acids long. Binds to DNA in a double-stranded, site-specific manner. This Rickettsia typhi (strain ATCC VR-144 / Wilmington) protein is Lon protease.